The primary structure comprises 47 residues: Large ribosomal subunit protein eL40 (47 aa).

It belongs to the eukaryotic ribosomal protein eL40 family.

The protein is Large ribosomal subunit protein eL40 of Methanocaldococcus jannaschii (strain ATCC 43067 / DSM 2661 / JAL-1 / JCM 10045 / NBRC 100440) (Methanococcus jannaschii).